A 92-amino-acid polypeptide reads, in one-letter code: Phosphoribosyl-ATP pyrophosphatase (92 aa).

Belongs to the PRA-PH family.

It is found in the cytoplasm. The catalysed reaction is 1-(5-phospho-beta-D-ribosyl)-ATP + H2O = 1-(5-phospho-beta-D-ribosyl)-5'-AMP + diphosphate + H(+). It functions in the pathway amino-acid biosynthesis; L-histidine biosynthesis; L-histidine from 5-phospho-alpha-D-ribose 1-diphosphate: step 2/9. The sequence is that of Phosphoribosyl-ATP pyrophosphatase from Leptospira interrogans serogroup Icterohaemorrhagiae serovar copenhageni (strain Fiocruz L1-130).